A 394-amino-acid polypeptide reads, in one-letter code: Elongation factor Tu (394 aa).

The tr-type G domain occupies 10-204; sequence KPHVNVGTIG…ALDSYIPEPE (195 aa). The interval 19–26 is G1; that stretch reads GHVDHGKT. 19 to 26 is a binding site for GTP; it reads GHVDHGKT. Thr26 contacts Mg(2+). A G2 region spans residues 60-64; sequence GITIN. The interval 81–84 is G3; that stretch reads DCPG. Residues 81–85 and 136–139 each bind GTP; these read DCPGH and NKCD. Positions 136–139 are G4; the sequence is NKCD. The tract at residues 174 to 176 is G5; the sequence is SAL.

The protein belongs to the TRAFAC class translation factor GTPase superfamily. Classic translation factor GTPase family. EF-Tu/EF-1A subfamily. In terms of assembly, monomer.

The protein localises to the cytoplasm. The enzyme catalyses GTP + H2O = GDP + phosphate + H(+). In terms of biological role, GTP hydrolase that promotes the GTP-dependent binding of aminoacyl-tRNA to the A-site of ribosomes during protein biosynthesis. In Shewanella sp. (strain ANA-3), this protein is Elongation factor Tu.